The following is a 157-amino-acid chain: Cyclic pyranopterin monophosphate synthase (157 aa).

Substrate contacts are provided by residues 74–76 (MCH) and 112–113 (ME). The active site involves Asp127.

Belongs to the MoaC family. As to quaternary structure, homohexamer; trimer of dimers.

It carries out the reaction (8S)-3',8-cyclo-7,8-dihydroguanosine 5'-triphosphate = cyclic pyranopterin phosphate + diphosphate. It functions in the pathway cofactor biosynthesis; molybdopterin biosynthesis. Its function is as follows. Catalyzes the conversion of (8S)-3',8-cyclo-7,8-dihydroguanosine 5'-triphosphate to cyclic pyranopterin monophosphate (cPMP). In Campylobacter jejuni subsp. jejuni serotype O:6 (strain 81116 / NCTC 11828), this protein is Cyclic pyranopterin monophosphate synthase.